A 122-amino-acid polypeptide reads, in one-letter code: Flagellar protein FliT (122 aa).

The interval 1-50 (MERQQQLLAAYQQIHSLSSQMIALAQTERWEDLVELELAYVTAVESTAAF) is required for homodimerization. Positions 60 to 98 (LQELLRNKLQQILDNETELKRLLQQRMDQLKELIGQSTR) are fliD binding.

The protein belongs to the FliT family. Homodimer. Interacts with FliD and FlhC.

The protein resides in the cytoplasm. It localises to the cytosol. Dual-function protein that regulates the transcription of class 2 flagellar operons and that also acts as an export chaperone for the filament-capping protein FliD. As a transcriptional regulator, acts as an anti-FlhDC factor; it directly binds FlhC, thus inhibiting the binding of the FlhC/FlhD complex to class 2 promoters, resulting in decreased expression of class 2 flagellar operons. As a chaperone, effects FliD transition to the membrane by preventing its premature polymerization, and by directing it to the export apparatus. The sequence is that of Flagellar protein FliT from Serratia proteamaculans (strain 568).